We begin with the raw amino-acid sequence, 451 residues long: tRNA modification GTPase MnmE (451 aa).

The (6S)-5-formyl-5,6,7,8-tetrahydrofolate site is built by Arg23, Glu80, and Lys119. The TrmE-type G domain maps to 215–372 (GIKVVLTGQP…LRTVLLKTVG (158 aa)). Asn225 contributes to the K(+) binding site. Residues 225–230 (NVGKSS), 244–250 (TEIPGTT), and 269–272 (DTAG) contribute to the GTP site. Ser229 lines the Mg(2+) pocket. The K(+) site is built by Thr244, Ile246, and Thr249. Thr250 serves as a coordination point for Mg(2+). Lys451 contacts (6S)-5-formyl-5,6,7,8-tetrahydrofolate.

Belongs to the TRAFAC class TrmE-Era-EngA-EngB-Septin-like GTPase superfamily. TrmE GTPase family. In terms of assembly, homodimer. Heterotetramer of two MnmE and two MnmG subunits. Requires K(+) as cofactor.

The protein localises to the cytoplasm. Its function is as follows. Exhibits a very high intrinsic GTPase hydrolysis rate. Involved in the addition of a carboxymethylaminomethyl (cmnm) group at the wobble position (U34) of certain tRNAs, forming tRNA-cmnm(5)s(2)U34. The polypeptide is tRNA modification GTPase MnmE (Nitrosomonas eutropha (strain DSM 101675 / C91 / Nm57)).